Here is a 321-residue protein sequence, read N- to C-terminus: MARSKIALIGAGQIGGTLALLAGLKELGDVVLFDLVEGVPQGKALDLAELSPVAGFDAAFAGTGAYEQIAGADVVIVTAGVPRKPGMSRDDLLAVNLKVMEQAGAGIAKYAPDAFVICVTNPLDAMVWALQKASGLPRHKVVGMAGVLDSARLRYFLADEFNVSVEDVTAMVLGGHGDTMVPLMRYCTVAGIPVPDLIRIGWTSTDRIEAIVTRTRNGGAEIVELLKSGSAFYAPAASAIVMAESYLKDKKRVLPVAAPLSGEYGFRDLYVGVPAVIGARGVERIVELELDRAERAQFEQSVASVQGLVDACAKIAPDLVR.

NAD(+) contacts are provided by residues 10-15 (GAGQIG) and D34. Positions 83 and 89 each coordinate substrate. NAD(+) is bound by residues N96 and 119-121 (VTN). Positions 121 and 152 each coordinate substrate. H176 serves as the catalytic Proton acceptor.

This sequence belongs to the LDH/MDH superfamily. MDH type 3 family.

It catalyses the reaction (S)-malate + NAD(+) = oxaloacetate + NADH + H(+). Its function is as follows. Catalyzes the reversible oxidation of malate to oxaloacetate. This Azorhizobium caulinodans (strain ATCC 43989 / DSM 5975 / JCM 20966 / LMG 6465 / NBRC 14845 / NCIMB 13405 / ORS 571) protein is Malate dehydrogenase.